Consider the following 634-residue polypeptide: Endoribonuclease rege-1 (634 aa).

3 disordered regions span residues 1–33, 90–113, and 156–223; these read MDSTARGHAPLCRTSNQRGLGTRLNPYYQSTPH, SHPSLSRESSDPSKIDDDQTAPMI, and KMGL…NPDP. Basic and acidic residues predominate over residues 97–106; the sequence is ESSDPSKIDD. Low complexity-rich tracts occupy residues 182–194 and 201–217; these read SSASSSSASSSSS and SVSIATSSPATSSSTPS. An RNase NYN domain is found at 225 to 377; that stretch reads LRAVVVDGSN…PSGRHGPRIE (153 aa). Asp314 is a binding site for Mg(2+). The C3H1-type zinc-finger motif lies at 387 to 412; the sequence is SSNPLVCPYARKCTYGNKCKFYHPER.

The protein belongs to the ZC3H12 family. It depends on Mg(2+) as a cofactor. In terms of tissue distribution, expressed in the intestinal cells adjacent to the pharynx.

It localises to the cytoplasm. Functionally, endonuclease which binds to the 3'UTR of target mRNAs and induces degradation of the transcript. Acts together with rle-1 to repress the expression of the transcription factor ets-4 by binding to the conserved ADE (alternate decay element) and RCE (REGE-1 cleavage element) stem loop structure in its 3'UTR, which controls the expression of genes in the IIS and TORC1 pathways, including those involved in lipid metabolism and autophagosome formation. May play a role in the clearance of apoptotic cell corpses. The protein is Endoribonuclease rege-1 of Caenorhabditis elegans.